We begin with the raw amino-acid sequence, 187 residues long: Putative protein YbeM (187 aa).

One can recognise a CN hydrolase domain in the interval 1–163 (MMTTILTIHV…PALIMAEVTP (163 aa)).

The protein belongs to the carbon-nitrogen hydrolase superfamily. NIT1/NIT2 family.

Functionally, pseudogene resulting from a nucleotide deletion that introduces a premature stop codon at position 66. This is the C-terminal fragment. The intact protein (AC A0A140NCB4) hydrolyzes deaminated glutathione (dGSH, 2-oxoglutaramate) to alpha-ketoglutarate (alpha-KG) and cysteinylglycine, has less activity against alpha-ketoglutaramate (a-KGM) and no activity on glutathione or L-glutamine. May function as a metabolite repair enzyme. This is Putative protein YbeM (ybeM) from Escherichia coli (strain K12).